A 184-amino-acid polypeptide reads, in one-letter code: GTP cyclohydrolase 1 (184 aa).

Zn(2+)-binding residues include Cys74, His77, and Cys145.

This sequence belongs to the GTP cyclohydrolase I family. Toroid-shaped homodecamer, composed of two pentamers of five dimers.

The enzyme catalyses GTP + H2O = 7,8-dihydroneopterin 3'-triphosphate + formate + H(+). Its pathway is cofactor biosynthesis; 7,8-dihydroneopterin triphosphate biosynthesis; 7,8-dihydroneopterin triphosphate from GTP: step 1/1. This chain is GTP cyclohydrolase 1 (folE), found in Aquifex aeolicus (strain VF5).